Here is a 337-residue protein sequence, read N- to C-terminus: Anthranilate phosphoribosyltransferase (337 aa).

5-phospho-alpha-D-ribose 1-diphosphate contacts are provided by residues glycine 81, 84-85 (GD), threonine 89, 91-94 (NIST), 109-117 (KHGNRALSS), and threonine 121. Glycine 81 contacts anthranilate. Residue serine 93 coordinates Mg(2+). Asparagine 112 is a binding site for anthranilate. Arginine 167 is a binding site for anthranilate. Mg(2+)-binding residues include aspartate 225 and glutamate 226.

The protein belongs to the anthranilate phosphoribosyltransferase family. Homodimer. Mg(2+) is required as a cofactor.

It carries out the reaction N-(5-phospho-beta-D-ribosyl)anthranilate + diphosphate = 5-phospho-alpha-D-ribose 1-diphosphate + anthranilate. It functions in the pathway amino-acid biosynthesis; L-tryptophan biosynthesis; L-tryptophan from chorismate: step 2/5. Functionally, catalyzes the transfer of the phosphoribosyl group of 5-phosphorylribose-1-pyrophosphate (PRPP) to anthranilate to yield N-(5'-phosphoribosyl)-anthranilate (PRA). This is Anthranilate phosphoribosyltransferase from Sinorhizobium medicae (strain WSM419) (Ensifer medicae).